A 179-amino-acid polypeptide reads, in one-letter code: Large ribosomal subunit protein uL5 (179 aa).

It belongs to the universal ribosomal protein uL5 family. Part of the 50S ribosomal subunit; part of the 5S rRNA/L5/L18/L25 subcomplex. Contacts the 5S rRNA and the P site tRNA. Forms a bridge to the 30S subunit in the 70S ribosome.

In terms of biological role, this is one of the proteins that bind and probably mediate the attachment of the 5S RNA into the large ribosomal subunit, where it forms part of the central protuberance. In the 70S ribosome it contacts protein S13 of the 30S subunit (bridge B1b), connecting the 2 subunits; this bridge is implicated in subunit movement. Contacts the P site tRNA; the 5S rRNA and some of its associated proteins might help stabilize positioning of ribosome-bound tRNAs. This Tolumonas auensis (strain DSM 9187 / NBRC 110442 / TA 4) protein is Large ribosomal subunit protein uL5.